The sequence spans 191 residues: Pyridoxal 5'-phosphate synthase subunit PdxT (191 aa).

52–54 (GES) serves as a coordination point for L-glutamine. Cys-81 acts as the Nucleophile in catalysis. L-glutamine-binding positions include Arg-108 and 136–137 (IR). Residues His-172 and Glu-174 each act as charge relay system in the active site.

The protein belongs to the glutaminase PdxT/SNO family. In terms of assembly, in the presence of PdxS, forms a dodecamer of heterodimers. Only shows activity in the heterodimer.

It catalyses the reaction aldehydo-D-ribose 5-phosphate + D-glyceraldehyde 3-phosphate + L-glutamine = pyridoxal 5'-phosphate + L-glutamate + phosphate + 3 H2O + H(+). It carries out the reaction L-glutamine + H2O = L-glutamate + NH4(+). The protein operates within cofactor biosynthesis; pyridoxal 5'-phosphate biosynthesis. Functionally, catalyzes the hydrolysis of glutamine to glutamate and ammonia as part of the biosynthesis of pyridoxal 5'-phosphate. The resulting ammonia molecule is channeled to the active site of PdxS. The sequence is that of Pyridoxal 5'-phosphate synthase subunit PdxT from Actinobacillus pleuropneumoniae serotype 7 (strain AP76).